Reading from the N-terminus, the 229-residue chain is Ribonuclease HII (229 aa).

In terms of domain architecture, RNase H type-2 spans 34 to 223 (WPVAGADEAG…LRKVEDGPQM (190 aa)). Positions 40, 41, and 131 each coordinate a divalent metal cation.

Belongs to the RNase HII family. Mn(2+) is required as a cofactor. Mg(2+) serves as cofactor.

The protein resides in the cytoplasm. The enzyme catalyses Endonucleolytic cleavage to 5'-phosphomonoester.. Its function is as follows. Endonuclease that specifically degrades the RNA of RNA-DNA hybrids. This chain is Ribonuclease HII, found in Rhizobium leguminosarum bv. trifolii (strain WSM2304).